The primary structure comprises 100 residues: Probable antitoxin MazE4 (100 aa).

A disordered region spans residues 77 to 100 (PYESEAERSAARARRNARQQRSAQ).

Forms a complex with cognate toxin MazF4.

Antitoxin component of a type II toxin-antitoxin (TA) system. Labile antitoxin that binds to cognate MazF4 toxin and counteracts its endoribonuclease activity. In Mycobacterium tuberculosis (strain CDC 1551 / Oshkosh), this protein is Probable antitoxin MazE4 (mazE4).